A 625-amino-acid polypeptide reads, in one-letter code: Chaperone protein DnaK (625 aa).

T197 is subject to Phosphothreonine; by autocatalysis. Positions 598–625 (AYAKEQGGTQQGTDTKKKDDDVIDAEVE) are disordered.

Belongs to the heat shock protein 70 family.

In terms of biological role, acts as a chaperone. This Helicobacter hepaticus (strain ATCC 51449 / 3B1) protein is Chaperone protein DnaK.